Here is a 109-residue protein sequence, read N- to C-terminus: Probable cytochrome b-c1 complex subunit 7 (109 aa).

Belongs to the UQCRB/QCR7 family. As to quaternary structure, component of the ubiquinol-cytochrome c oxidoreductase (cytochrome b-c1 complex, complex III, CIII), a multisubunit enzyme composed of 3 respiratory subunits cytochrome b, cytochrome c1 and Rieske protein, 2 core protein subunits, and additional low-molecular weight protein subunits. The complex exists as an obligatory dimer and forms supercomplexes (SCs) in the inner mitochondrial membrane with cytochrome c oxidase (complex IV, CIV).

The protein resides in the mitochondrion inner membrane. Component of the ubiquinol-cytochrome c oxidoreductase, a multisubunit transmembrane complex that is part of the mitochondrial electron transport chain which drives oxidative phosphorylation. The respiratory chain contains 3 multisubunit complexes succinate dehydrogenase (complex II, CII), ubiquinol-cytochrome c oxidoreductase (cytochrome b-c1 complex, complex III, CIII) and cytochrome c oxidase (complex IV, CIV), that cooperate to transfer electrons derived from NADH and succinate to molecular oxygen, creating an electrochemical gradient over the inner membrane that drives transmembrane transport and the ATP synthase. The cytochrome b-c1 complex catalyzes electron transfer from ubiquinol to cytochrome c, linking this redox reaction to translocation of protons across the mitochondrial inner membrane, with protons being carried across the membrane as hydrogens on the quinol. In the process called Q cycle, 2 protons are consumed from the matrix, 4 protons are released into the intermembrane space and 2 electrons are passed to cytochrome c. This is Probable cytochrome b-c1 complex subunit 7 from Dictyostelium discoideum (Social amoeba).